The primary structure comprises 462 residues: Steroidogenic factor 1 (462 aa).

Residues 10-85 (DELCPVCGDK…VGMRLEAVRA (76 aa)) constitute a DNA-binding region (nuclear receptor). Residues 13-33 (CPVCGDKVSGYHYGLLTCESC) form an NR C4-type zinc finger. N6-acetyllysine occurs at positions 34, 38, and 72. The NR C4-type zinc finger occupies 49–73 (CTESQSCKIDKTQRKRCPFCRFQKC). The disordered stretch occupies residues 117 to 149 (GFKLETGPPMGVPPPPPPPPDYMLPPSLHAPEP). Lys119 is covalently cross-linked (Glycyl lysine isopeptide (Lys-Gly) (interchain with G-Cter in SUMO)). The segment covering 126 to 139 (MGVPPPPPPPPDYM) has biased composition (pro residues). Residue Lys194 forms a Glycyl lysine isopeptide (Lys-Gly) (interchain with G-Cter in SUMO) linkage. Residue Ser203 is modified to Phosphoserine; by CDK7. Positions 223-460 (NVPELILQLL…NLLIEMLQAK (238 aa)) constitute an NR LBD domain. Residues Gly342, Tyr437, and Lys441 each contribute to the a 1,2-diacyl-sn-glycero-3-phosphocholine site.

It belongs to the nuclear hormone receptor family. NR5 subfamily. As to quaternary structure, binds DNA as a monomer. Part of a complex consisting of SFPQ, NONO and NR5A1. Interacts with NR0B2, NCOA2 and PPARGC1A. Interacts with DGKQ and CDK7. Binds to and activated by HIPK3. Acetylation stimulates the transcriptional activity. Post-translationally, sumoylation reduces CDK7-mediated phosphorylation on Ser-203. In terms of processing, phosphorylated on Ser-203 by CDK7. This phosphorylation promotes transcriptional activity.

It is found in the nucleus. Functionally, transcriptional activator. Seems to be essential for sexual differentiation and formation of the primary steroidogenic tissues. Binds to the Ad4 site found in the promoter region of steroidogenic P450 genes such as CYP11A, CYP11B and CYP21B. Also regulates the AMH/Muellerian inhibiting substance gene as well as the AHCH and STAR genes. 5'-YCAAGGYC-3' and 5'-RRAGGTCA-3' are the consensus sequences for the recognition by NR5A1. The SFPQ-NONO-NR5A1 complex binds to the CYP17 promoter and regulates basal and cAMP-dependent transcriptional activity. Binds phosphatidylcholine and phospholipids with a phosphatidylinositol (PI) headgroup, in particular PI(3,4)P2 and PI(3,4,5)P3. Activated by the phosphorylation of NR5A1 by HIPK3 leading to increased steroidogenic gene expression upon cAMP signaling pathway stimulation. The protein is Steroidogenic factor 1 (Nr5a1) of Rattus norvegicus (Rat).